Here is a 98-residue protein sequence, read N- to C-terminus: Hainantoxin-XVII.3 (98 aa).

Positions 1–40 (MTTVGVSLFRRSPEKITMKIATFLGLSFLLIASYFLICEA) are cleaved as a signal peptide. Residues 41–64 (QHPGFQELLILEENMRDPENSKER) constitute a propeptide that is removed on maturation. 3 cysteine pairs are disulfide-bonded: C66–C81, C73–C85, and C80–C95.

The protein belongs to the hainantoxin family. 17 subfamily. As to expression, expressed by the venom gland.

Its subcellular location is the secreted. Functionally, inhibits with low potency Kv1.2/KCNA2 and Kv1.3/KCNA3 voltage-gated potassium channels. The polypeptide is Hainantoxin-XVII.3 (Cyriopagopus hainanus (Chinese bird spider)).